The chain runs to 308 residues: Glutamyl-Q tRNA(Asp) synthetase (308 aa).

L-glutamate contacts are provided by residues 19-23 and Glu-55; that span reads RFAPS. The 'HIGH' region motif lies at 22 to 32; sequence PSPSGELHFGS. 4 residues coordinate Zn(2+): Cys-111, Cys-113, Tyr-125, and Cys-129. L-glutamate contacts are provided by Tyr-182 and Arg-200. A 'KMSKS' region motif is present at residues 238–242; sequence KLSKQ. Lys-241 provides a ligand contact to ATP.

Belongs to the class-I aminoacyl-tRNA synthetase family. GluQ subfamily. Requires Zn(2+) as cofactor.

Catalyzes the tRNA-independent activation of glutamate in presence of ATP and the subsequent transfer of glutamate onto a tRNA(Asp). Glutamate is transferred on the 2-amino-5-(4,5-dihydroxy-2-cyclopenten-1-yl) moiety of the queuosine in the wobble position of the QUC anticodon. The sequence is that of Glutamyl-Q tRNA(Asp) synthetase from Escherichia coli O6:H1 (strain CFT073 / ATCC 700928 / UPEC).